The following is a 564-amino-acid chain: Eukaryotic translation initiation factor 3 subunit L (564 aa).

Serine 2 is subject to N-acetylserine. Phosphoserine is present on serine 21. Positions 331-537 (DAIRVFANIL…IHIADTKVAR (207 aa)) constitute a PCI domain. Residues lysine 465 and lysine 549 each carry the N6-acetyllysine modification.

In terms of assembly, component of the eukaryotic translation initiation factor 3 (eIF-3) complex, which is composed of 13 subunits: EIF3A, EIF3B, EIF3C, EIF3D, EIF3E, EIF3F, EIF3G, EIF3H, EIF3I, EIF3J, EIF3K, EIF3L and EIF3M. The eIF-3 complex appears to include 3 stable modules: module A is composed of EIF3A, EIF3B, EIF3G and EIF3I; module B is composed of EIF3F, EIF3H, and EIF3M; and module C is composed of EIF3C, EIF3D, EIF3E, EIF3K and EIF3L. EIF3C of module C binds EIF3B of module A and EIF3H of module B, thereby linking the three modules. EIF3J is a labile subunit that binds to the eIF-3 complex via EIF3B. The eIF-3 complex interacts with RPS6KB1 under conditions of nutrient depletion. Mitogenic stimulation leads to binding and activation of a complex composed of MTOR and RPTOR, leading to phosphorylation and release of RPS6KB1 and binding of EIF4B to eIF-3. Interacts with RRN3.

It is found in the cytoplasm. Component of the eukaryotic translation initiation factor 3 (eIF-3) complex, which is required for several steps in the initiation of protein synthesis. The eIF-3 complex associates with the 40S ribosome and facilitates the recruitment of eIF-1, eIF-1A, eIF-2:GTP:methionyl-tRNAi and eIF-5 to form the 43S pre-initiation complex (43S PIC). The eIF-3 complex stimulates mRNA recruitment to the 43S PIC and scanning of the mRNA for AUG recognition. The eIF-3 complex is also required for disassembly and recycling of post-termination ribosomal complexes and subsequently prevents premature joining of the 40S and 60S ribosomal subunits prior to initiation. The eIF-3 complex specifically targets and initiates translation of a subset of mRNAs involved in cell proliferation, including cell cycling, differentiation and apoptosis, and uses different modes of RNA stem-loop binding to exert either translational activation or repression. Its function is as follows. (Microbial infection) In case of FCV infection, plays a role in the ribosomal termination-reinitiation event leading to the translation of VP2. The polypeptide is Eukaryotic translation initiation factor 3 subunit L (Homo sapiens (Human)).